A 314-amino-acid chain; its full sequence is Serine acetyltransferase 1, chloroplastic (314 aa).

This sequence belongs to the transferase hexapeptide repeat family. Homomultimer. Interacts with OASA1 and CYP20-3. Component of the cysteine synthase complex (CSC) composed of two OAS-TL dimers and one SAT hexamer. Mostly expressed in leaves. Localized in cortex, trichomes and vascular tissues, particularly in phloem.

Its subcellular location is the plastid. It localises to the chloroplast. It is found in the cytoplasm. It carries out the reaction L-serine + acetyl-CoA = O-acetyl-L-serine + CoA. It functions in the pathway amino-acid biosynthesis; L-cysteine biosynthesis; L-cysteine from L-serine: step 1/2. Serine acetyltransferase which catalyzes the formation of O-acetyl-L-serine from acetyl-CoA and L-serine. Also displays O-acetylserine (thio1)-lyase activity in vitro. May be involved in detoxification process by mediating the production of glutathione. This Arabidopsis thaliana (Mouse-ear cress) protein is Serine acetyltransferase 1, chloroplastic (SAT1).